A 538-amino-acid chain; its full sequence is Putative cysteine ligase BshC (538 aa).

Residues 460 to 483 (KINEQIELLEKMLKRNVEKKHEVQ) are a coiled coil.

This sequence belongs to the BshC family.

In terms of biological role, involved in bacillithiol (BSH) biosynthesis. May catalyze the last step of the pathway, the addition of cysteine to glucosamine malate (GlcN-Mal) to generate BSH. In Bacillus mycoides (strain KBAB4) (Bacillus weihenstephanensis), this protein is Putative cysteine ligase BshC.